The following is a 1202-amino-acid chain: DNA polymerase beta (1202 aa).

Repeat copies occupy residues 1071-1074 (AGNP), 1075-1078 (AGNP), and 1079-1082 (AGNA). The 3 X 4 AA tandem repeats of A-G-[NK]-[PA] stretch occupies residues 1071-1082 (AGNPAGNPAGNA).

The protein belongs to the DNA polymerase type-B family.

The catalysed reaction is DNA(n) + a 2'-deoxyribonucleoside 5'-triphosphate = DNA(n+1) + diphosphate. DNA-directed DNA polymerase involved in viral DNA replication. This is DNA polymerase beta (DPOL) from Ornithodoros (relapsing fever ticks).